The sequence spans 257 residues: Tryptophan synthase alpha chain (257 aa).

Residues glutamate 47 and aspartate 58 each act as proton acceptor in the active site.

The protein belongs to the TrpA family. As to quaternary structure, tetramer of two alpha and two beta chains.

It catalyses the reaction (1S,2R)-1-C-(indol-3-yl)glycerol 3-phosphate + L-serine = D-glyceraldehyde 3-phosphate + L-tryptophan + H2O. The protein operates within amino-acid biosynthesis; L-tryptophan biosynthesis; L-tryptophan from chorismate: step 5/5. Its function is as follows. The alpha subunit is responsible for the aldol cleavage of indoleglycerol phosphate to indole and glyceraldehyde 3-phosphate. This Listeria welshimeri serovar 6b (strain ATCC 35897 / DSM 20650 / CCUG 15529 / CIP 8149 / NCTC 11857 / SLCC 5334 / V8) protein is Tryptophan synthase alpha chain.